Here is a 174-residue protein sequence, read N- to C-terminus: Transcription factor bHLH168 (174 aa).

One can recognise a bHLH domain in the interval S14–L63.

This sequence belongs to the bHLH protein family.

The protein localises to the nucleus. This Arabidopsis thaliana (Mouse-ear cress) protein is Transcription factor bHLH168.